A 213-amino-acid polypeptide reads, in one-letter code: Non-structural protein NP-1 (213 aa).

The disordered stretch occupies residues 1 to 80; it reads MERSRSPRET…ATRKETATKK (80 aa). Basic and acidic residues-rich tracts occupy residues 15 to 33 and 43 to 58; these read SRDKSDADWSERRREERTR and AHGERSWGSWRSREKN.

This sequence belongs to the Bocaparvovirus Non-structural protein NP-1 family.

The protein resides in the host nucleus. Functionally, required for the expression of the capsid proteins. Performs the splicing and internal polyadenylation of the viral capsid-encoding mRNA precursor, which allows its maturation and expression. Transactivates the viral promoter. In Bos taurus (Bovine), this protein is Non-structural protein NP-1 (NP1).